The chain runs to 298 residues: MTDLHTDVERYLRYLSVERQLSPITLLNYQRQLEAIINFASENGLQSWQQCDAAMVRNFAVRSRRKGLGAASLALRLSALRSFFDWLVSQNELKANPAKGVSAPKAPRHLPKNIDVDDMNRLLDIDINDPLAVRDRAMLEVMYGAGLRLSELVGLDIKHLDLESGEVWVMGKGSKERRLPIGRNAVAWIEHWLDLRDLFGSEDDALFLSKLGKRISARNVQKRFAEWGIKQGLNNHVHPHKLRHSFATHMLESSGDLRGVQELLGHANLSTTQIYTHLDFQHLASVYDAAHPRAKRGK.

Residues 2–88 (TDLHTDVERY…ALRSFFDWLV (87 aa)) form the Core-binding (CB) domain. Positions 109-288 (HLPKNIDVDD…DFQHLASVYD (180 aa)) constitute a Tyr recombinase domain. Catalysis depends on residues R148, K172, H240, R243, and H266. Catalysis depends on Y275, which acts as the O-(3'-phospho-DNA)-tyrosine intermediate.

It belongs to the 'phage' integrase family. XerC subfamily. Forms a cyclic heterotetrameric complex composed of two molecules of XerC and two molecules of XerD, in which XerC interacts with XerD via its C-terminal region, XerD interacts with XerC via its C-terminal region and so on.

It is found in the cytoplasm. With respect to regulation, ftsK may regulate the catalytic switch between XerC and XerD in the heterotetrameric complex during the two steps of the recombination process. Site-specific tyrosine recombinase, which acts by catalyzing the cutting and rejoining of the recombining DNA molecules. Binds cooperatively to specific DNA consensus sequences that are separated from XerD binding sites by a short central region, forming the heterotetrameric XerC-XerD complex that recombines DNA substrates. The complex is essential to convert dimers of the bacterial chromosome into monomers to permit their segregation at cell division. It also contributes to the segregational stability of plasmids. In the complex XerC specifically exchanges the top DNA strands. In Shigella dysenteriae serotype 1 (strain Sd197), this protein is Tyrosine recombinase XerC.